The chain runs to 306 residues: Phospho-N-acetylmuramoyl-pentapeptide-transferase (306 aa).

The next 10 helical transmembrane spans lie at Ile2–Trp22, Ser47–Phe67, Phe71–Leu91, Ile105–Ile125, Leu131–Pro151, Gly162–Phe182, Ile185–His205, Ile209–Val229, Leu236–Phe256, and Ile284–Tyr304.

It belongs to the glycosyltransferase 4 family. MraY subfamily. Mg(2+) is required as a cofactor.

Its subcellular location is the cell inner membrane. The enzyme catalyses UDP-N-acetyl-alpha-D-muramoyl-L-alanyl-gamma-D-glutamyl-meso-2,6-diaminopimeloyl-D-alanyl-D-alanine + di-trans,octa-cis-undecaprenyl phosphate = di-trans,octa-cis-undecaprenyl diphospho-N-acetyl-alpha-D-muramoyl-L-alanyl-D-glutamyl-meso-2,6-diaminopimeloyl-D-alanyl-D-alanine + UMP. The protein operates within cell wall biogenesis; peptidoglycan biosynthesis. In terms of biological role, catalyzes the initial step of the lipid cycle reactions in the biosynthesis of the cell wall peptidoglycan: transfers peptidoglycan precursor phospho-MurNAc-pentapeptide from UDP-MurNAc-pentapeptide onto the lipid carrier undecaprenyl phosphate, yielding undecaprenyl-pyrophosphoryl-MurNAc-pentapeptide, known as lipid I. This Dictyoglomus thermophilum (strain ATCC 35947 / DSM 3960 / H-6-12) protein is Phospho-N-acetylmuramoyl-pentapeptide-transferase.